The following is a 360-amino-acid chain: GTPase Obg (360 aa).

In terms of domain architecture, Obg spans 1-156 (MFVDSVEIII…KCVRLELKLI (156 aa)). The region spanning 157-360 (ADIGLVGFPN…LKFVLLEALP (204 aa)) is the OBG-type G domain. Residues 163–170 (GFPNAGKS), 188–192 (FTTLV), 210–213 (DIPG), 279–282 (NKCD), and 341–343 (SAL) contribute to the GTP site. Residues S170 and T190 each contribute to the Mg(2+) site.

This sequence belongs to the TRAFAC class OBG-HflX-like GTPase superfamily. OBG GTPase family. In terms of assembly, monomer. Mg(2+) is required as a cofactor.

It localises to the cytoplasm. An essential GTPase which binds GTP, GDP and possibly (p)ppGpp with moderate affinity, with high nucleotide exchange rates and a fairly low GTP hydrolysis rate. Plays a role in control of the cell cycle, stress response, ribosome biogenesis and in those bacteria that undergo differentiation, in morphogenesis control. The polypeptide is GTPase Obg (Helicobacter pylori (strain Shi470)).